We begin with the raw amino-acid sequence, 387 residues long: Phosphoglycerate kinase (387 aa).

Substrate is bound by residues 21–23 (DLN), Arg36, 59–62 (HLGR), Arg113, and Arg146. ATP-binding positions include Lys197, Glu314, and 340-343 (GGDT).

The protein belongs to the phosphoglycerate kinase family. As to quaternary structure, monomer.

It localises to the cytoplasm. It carries out the reaction (2R)-3-phosphoglycerate + ATP = (2R)-3-phospho-glyceroyl phosphate + ADP. Its pathway is carbohydrate degradation; glycolysis; pyruvate from D-glyceraldehyde 3-phosphate: step 2/5. The sequence is that of Phosphoglycerate kinase (pgk) from Pasteurella multocida (strain Pm70).